A 247-amino-acid chain; its full sequence is Zinc finger protein YPR015C (247 aa).

C2H2-type zinc fingers lie at residues 185-207 and 213-237; these read KQCPICGKVCSRPSTLRTHYLIH and FKCTWEHCNKSFNVKSNMLRHLRTH.

This Saccharomyces cerevisiae (strain ATCC 204508 / S288c) (Baker's yeast) protein is Zinc finger protein YPR015C.